The primary structure comprises 288 residues: Quinate/shikimate dehydrogenase (288 aa).

Substrate is bound by residues lysine 71 and aspartate 107. Residues 132-135, 155-158, lysine 205, 232-235, and glycine 255 each bind NAD(+); these read AGGA, NRRD, and CVYN.

The protein belongs to the shikimate dehydrogenase family. As to quaternary structure, homodimer.

It carries out the reaction L-quinate + NAD(+) = 3-dehydroquinate + NADH + H(+). The catalysed reaction is L-quinate + NADP(+) = 3-dehydroquinate + NADPH + H(+). It catalyses the reaction shikimate + NADP(+) = 3-dehydroshikimate + NADPH + H(+). The enzyme catalyses shikimate + NAD(+) = 3-dehydroshikimate + NADH + H(+). Its pathway is metabolic intermediate biosynthesis; chorismate biosynthesis; chorismate from D-erythrose 4-phosphate and phosphoenolpyruvate: step 4/7. Functionally, the actual biological function of YdiB remains unclear, nor is it known whether 3-dehydroshikimate or quinate represents the natural substrate. Catalyzes the reversible NAD-dependent reduction of both 3-dehydroshikimate (DHSA) and 3-dehydroquinate to yield shikimate (SA) and quinate, respectively. It can use both NAD or NADP for catalysis, however it has higher catalytic efficiency with NAD. The polypeptide is Quinate/shikimate dehydrogenase (Escherichia coli (strain 55989 / EAEC)).